The sequence spans 394 residues: Lipase 3 (394 aa).

An N-terminal signal peptide occupies residues 1–20 (MTRGALKVTILLVGLGLVLA). An N-linked (GlcNAc...) asparagine glycan is attached at asparagine 131. Active-site charge relay system residues include serine 164 and histidine 369.

The protein belongs to the AB hydrolase superfamily. Lipase family. As to expression, fat body.

In Drosophila melanogaster (Fruit fly), this protein is Lipase 3 (Lip3).